The primary structure comprises 188 residues: Mitochondrial import receptor subunit TOM20 homolog (188 aa).

The Mitochondrial intermembrane portion of the chain corresponds to 1–12; the sequence is MTDTLFGFNKSN. Residues 13–31 traverse the membrane as a helical segment; the sequence is VVLAAGVAGAAFLGYCIYF. The Cytoplasmic segment spans residues 32–188; sequence DHKRINAPDY…ELIDDTDDLE (157 aa). Disordered regions lie at residues 48–67 and 155–188; these read KRRA…PAGG and ADEA…DDLE. A compositionally biased stretch (low complexity) spans 58–67; it reads MAARRPPAGG.

Belongs to the Tom20 family. In terms of assembly, forms part of the preprotein translocase complex of the outer mitochondrial membrane (TOM complex).

It localises to the mitochondrion outer membrane. Its function is as follows. Central component of the receptor complex responsible for the recognition and translocation of cytosolically synthesized mitochondrial preproteins. Together with TOM22 functions as the transit peptide receptor at the surface of the mitochondrion outer membrane and facilitates the movement of preproteins into the translocation pore. This is Mitochondrial import receptor subunit TOM20 homolog (tomm-20) from Caenorhabditis briggsae.